The following is an 888-amino-acid chain: Extra-large guanine nucleotide-binding protein 1 (888 aa).

The disordered stretch occupies residues 98-119; sequence SVIEHTEEEEEEEGGDGEDCEL. Residues 103–118 are compositionally biased toward acidic residues; it reads TEEEEEEEGGDGEDCE. The Nuclear localization signal signature appears at 205 to 222; it reads RRVRVVPVKKQPQTKGKK. An RING-type; degenerate zinc finger spans residues 225–268; the sequence is CYRCFKGSRFTEKEVCLVCDAKYCNSCVLRAMGSMPEGRKCVTC. In terms of domain architecture, G-alpha spans 482-879; that stretch reads TLQKILLVGN…NICMSEYSMY (398 aa). Residues 485 to 498 are G1 motif; the sequence is KILLVGNSGSGTST. GTP is bound by residues 490–498 and 661–669; these read GNSGSGTST and DILYAEGVT. S497 and T669 together coordinate Ca(2+). The interval 661–669 is G2 motif; it reads DILYAEGVT. A G3 motif region spans residues 702-711; it reads YQLIRVPSRG. Positions 770–777 are G4 motif; sequence LLILNKYD. 774 to 777 provides a ligand contact to GTP; it reads NKYD. The G5 motif stretch occupies residues 843–848; the sequence is SKSLDP.

It belongs to the G-alpha family. XLG subfamily. Requires Ca(2+) as cofactor. In terms of tissue distribution, ubiquitous. Strongly expressed in vascular tissues, root and shoot meristems and lateral root primordia.

Its subcellular location is the nucleus. Guanine nucleotide-binding proteins (G proteins) are involved as modulators or transducers in various transmembrane signaling systems. Binds GTP with specificity. Plays a role in the root morphogenesis by regulation of the cell proliferation. The polypeptide is Extra-large guanine nucleotide-binding protein 1 (XLG1) (Arabidopsis thaliana (Mouse-ear cress)).